A 101-amino-acid polypeptide reads, in one-letter code: Apolipoprotein C-II (101 aa).

The signal sequence occupies residues 1–22 (MGTRFLLALCLVLLVLGFEVQG). Positions 23–28 (AQLPQQ) are cleaved as a propeptide — removed in mature form. The tract at residues 66–74 (AVDEKLRDL) is lipid binding. Positions 78-101 (STAAMSTYTGIFTDQVLSVLKGEE) are lipoprotein lipase cofactor.

Belongs to the apolipoprotein C2 family. Post-translationally, proapolipoprotein C-II is synthesized as a sialic acid containing glycoprotein which is subsequently desialylated prior to its proteolytic processing. Proapolipoprotein C-II, the major form found in plasma undergoes proteolytic cleavage of its N-terminal hexapeptide to generate apolipoprotein C-II, which occurs as the minor form in plasma.

The protein resides in the secreted. In terms of biological role, component of chylomicrons, very low-density lipoproteins (VLDL), low-density lipoproteins (LDL), and high-density lipoproteins (HDL) in plasma. Plays an important role in lipoprotein metabolism as an activator of lipoprotein lipase. Both proapolipoprotein C-II and apolipoprotein C-II can activate lipoprotein lipase. The chain is Apolipoprotein C-II (APOC2) from Papio anubis (Olive baboon).